We begin with the raw amino-acid sequence, 330 residues long: Polyprenol dehydrogenase (330 aa).

Residues Ile-55, Tyr-208, Lys-212, and Thr-245 each contribute to the NAD(+) site. Catalysis depends on Tyr-208, which acts as the Proton acceptor.

This sequence belongs to the short-chain dehydrogenases/reductases (SDR) family. Widely expressed. Highly expressed in the pancreas.

The protein resides in the lipid droplet. It is found in the secreted. It catalyses the reaction a di-trans,poly-cis-polyprenol + NAD(+) = a di-trans,poly-cis-polyprenal + NADH + H(+). It carries out the reaction a di-trans,poly-cis-polyprenol + NADP(+) = a di-trans,poly-cis-polyprenal + NADPH + H(+). The enzyme catalyses a di-trans,poly-cis-dolichol + NADP(+) = a di-trans,poly-cis-dolichal + NADPH + H(+). The catalysed reaction is a di-trans,poly-cis-dolichol + NAD(+) = a di-trans,poly-cis-dolichal + NADH + H(+). It participates in protein modification; protein glycosylation. In terms of biological role, oxidoreductase that plays a key role in early steps of protein N-linked glycosylation by mediating two non-consecutive steps in dolichol biosynthesis. Acts both as a NAD(+)-dependent dehydrogenase and as a NADPH-dependent reductase during the conversion of polyprenol into dolichol. First catalyzes the NAD(+)-dependent dehydrogenation of polyprenol into polyprenal; polyprenal is then reduced into dolichal by SRD5A3. It then catalyzes the NADPH-dependent reduction of dolichal into dolichol. May also acts as a positive regulator of starvation-induced autophagy. The protein is Polyprenol dehydrogenase of Homo sapiens (Human).